Here is a 161-residue protein sequence, read N- to C-terminus: Allophycocyanin beta chain (161 aa).

Asparagine 71 carries the post-translational modification N4-methylasparagine. Cysteine 81 contacts (2R,3E)-phycocyanobilin.

The protein belongs to the phycobiliprotein family. As to quaternary structure, heterodimer of an alpha and a beta chain. In terms of processing, contains one covalently linked phycocyanobilin chromophore.

The protein localises to the plastid. It localises to the chloroplast thylakoid membrane. Its function is as follows. Light-harvesting photosynthetic bile pigment-protein from the phycobiliprotein complex. Allophycocyanin has a maximum absorption at approximately 650 nanometers. The chain is Allophycocyanin beta chain (apcB) from Porphyra purpurea (Red seaweed).